Consider the following 982-residue polypeptide: Protein phosphatase 1 regulatory subunit 12B (982 aa).

Over residues 1–24 the composition is skewed to basic and acidic residues; that stretch reads MAELEHLGGKRAESARMRRAEQLR. Residues 1–50 form a disordered region; the sequence is MAELEHLGGKRAESARMRRAEQLRRWRGSLTEQEPAERRGAGRQPLTRRG. The residue at position 29 (Ser29) is a Phosphoserine. ANK repeat units lie at residues 57-86, 90-119, 123-152, 216-245, and 249-278; these read EDGA…DINT, DGLT…NVNQ, EGWT…SVGI, SGAT…ELNV, and DGWT…DMDI. 4 disordered regions span residues 342–517, 556–579, 606–864, and 918–948; these read EETP…RESA, RTPH…SSTP, TDSS…EARE, and AQQK…KMSE. Over residues 362-374 the composition is skewed to acidic residues; sequence SEEEEGEDEASES. A compositionally biased stretch (basic and acidic residues) spans 375 to 385; it reads ETEKEADKKPE. Positions 389-401 are enriched in polar residues; that stretch reads NHSNSESKSSITE. The segment covering 411–421 has biased composition (low complexity); sequence FSASSARRFSS. At Thr445 the chain carries Phosphothreonine. The span at 466–478 shows a compositional bias: low complexity; sequence SSIYRSSSSPRIS. Over residues 482 to 491 the composition is skewed to basic and acidic residues; the sequence is DNKDKERENK. Positions 623–632 are enriched in basic and acidic residues; the sequence is VRDEEAESLR. Basic residues predominate over residues 633 to 643; it reads KARSRQARQTR. Thr646 is subject to Phosphothreonine. Basic and acidic residues predominate over residues 656–680; sequence EAERTFSRSRAERQAQEQPREKPTD. Positions 731 to 742 are enriched in low complexity; the sequence is TTPASPSTSRPS. The span at 743 to 755 shows a compositional bias: polar residues; that stretch reads LYTSSHLLWTNRF. Positions 797-807 are enriched in basic residues; the sequence is ERRRPKERRRG. At Thr808 the chain carries Phosphothreonine. The span at 824 to 836 shows a compositional bias: basic and acidic residues; it reads EEVKETWHERLSR. Ser839 bears the Phosphoserine mark. Residues 840 to 849 are compositionally biased toward polar residues; that stretch reads GGSNPTTSDS. Basic and acidic residues-rich tracts occupy residues 850–864, 918–927, and 933–948; these read YGDR…EARE, AQQKQEKTSD, and EMEK…KMSE. Ser947 carries the phosphoserine modification.

In terms of assembly, PP1 comprises a catalytic subunit, PPP1CA, PPP1CB or PPP1CC, and one or several targeting or regulatory subunits. PPP1R12B mediates binding to myosin. Isoform 3 and isoform 4 bind PPP1R12A, but not isoform 1 of PPP1R12B itself. Binds IL16. As to expression, detected in skeletal muscle, fetal and adult heart, brain, placenta, kidney, spleen, thymus, pancreas and lung. Isoform 3 and isoform 4 are heart specific.

It is found in the cytoplasm. The protein localises to the cytoskeleton. It localises to the stress fiber. Regulates myosin phosphatase activity. Augments Ca(2+) sensitivity of the contractile apparatus. The chain is Protein phosphatase 1 regulatory subunit 12B (PPP1R12B) from Homo sapiens (Human).